Reading from the N-terminus, the 254-residue chain is Rho-related protein racD (254 aa).

15 to 22 (GDGAVGKT) is a binding site for GTP. The Effector region motif lies at 37–45 (YVPTVFDNF). GTP-binding positions include 62–66 (DTAGQ) and 120–123 (TKTD). Low complexity predominate over residues 186-231 (AVTSPTSKSSGKSSPSSTSSKPSKTTTTTTTSSSSSSPPAASTAKP). The disordered stretch occupies residues 186–254 (AVTSPTSKSS…KDKDEKKPAK (69 aa)). Residues 232-254 (AGEKKLSWGLFRKKDKDEKKPAK) are compositionally biased toward basic and acidic residues.

Belongs to the small GTPase superfamily. Rho family.

In Dictyostelium discoideum (Social amoeba), this protein is Rho-related protein racD (racD).